Reading from the N-terminus, the 98-residue chain is Co-chaperonin GroES (98 aa).

The protein belongs to the GroES chaperonin family. Heptamer of 7 subunits arranged in a ring. Interacts with the chaperonin GroEL.

The protein resides in the cytoplasm. Together with the chaperonin GroEL, plays an essential role in assisting protein folding. The GroEL-GroES system forms a nano-cage that allows encapsulation of the non-native substrate proteins and provides a physical environment optimized to promote and accelerate protein folding. GroES binds to the apical surface of the GroEL ring, thereby capping the opening of the GroEL channel. The protein is Co-chaperonin GroES of Kineococcus radiotolerans (strain ATCC BAA-149 / DSM 14245 / SRS30216).